Reading from the N-terminus, the 255-residue chain is tRNA (guanine-N(1)-)-methyltransferase (255 aa).

Residues G121 and 141-146 contribute to the S-adenosyl-L-methionine site; that span reads IGDYVL. Positions 236 to 255 are disordered; it reads PVKAPNRAGRQKTPKNKTDG. The span at 244–255 shows a compositional bias: basic residues; the sequence is GRQKTPKNKTDG.

It belongs to the RNA methyltransferase TrmD family. As to quaternary structure, homodimer.

It localises to the cytoplasm. It catalyses the reaction guanosine(37) in tRNA + S-adenosyl-L-methionine = N(1)-methylguanosine(37) in tRNA + S-adenosyl-L-homocysteine + H(+). Its function is as follows. Specifically methylates guanosine-37 in various tRNAs. In Bradyrhizobium diazoefficiens (strain JCM 10833 / BCRC 13528 / IAM 13628 / NBRC 14792 / USDA 110), this protein is tRNA (guanine-N(1)-)-methyltransferase.